Reading from the N-terminus, the 382-residue chain is Pectinesterase (382 aa).

An N-terminal signal peptide occupies residues 1-16 (MKIIVLLLLAVVLASA). Cysteines 153 and 164 form a disulfide. An N-linked (GlcNAc...) asparagine glycan is attached at Asn-179. Gln-193 is a binding site for substrate. The active-site Proton donor is the Asp-216. Asp-242 acts as the Nucleophile in catalysis. Substrate-binding residues include Arg-306 and Trp-308. 2 N-linked (GlcNAc...) asparagine glycosylation sites follow: Asn-340 and Asn-376.

The protein belongs to the pectinesterase family. In terms of tissue distribution, expressed throughout the midgut with particularly strong expression in the ventriculus.

Its subcellular location is the secreted. It catalyses the reaction [(1-&gt;4)-alpha-D-galacturonosyl methyl ester](n) + n H2O = [(1-&gt;4)-alpha-D-galacturonosyl](n) + n methanol + n H(+). It participates in glycan metabolism; pectin degradation; 2-dehydro-3-deoxy-D-gluconate from pectin: step 1/5. Its function is as follows. Pectinesterase which probably plays an important role in the digestion of plant cell walls. This is Pectinesterase from Sitophilus oryzae (Rice weevil).